A 238-amino-acid chain; its full sequence is Large ribosomal subunit protein bL17m (238 aa).

This sequence belongs to the bacterial ribosomal protein bL17 family. Component of the mitochondrial large ribosomal subunit (mt-LSU). Mature yeast 74S mitochondrial ribosomes consist of a small (37S) and a large (54S) subunit. The 37S small subunit contains a 15S ribosomal RNA (15S mt-rRNA) and 34 different proteins. The 54S large subunit contains a 21S rRNA (21S mt-rRNA) and 46 different proteins.

It is found in the mitochondrion. Component of the mitochondrial ribosome (mitoribosome), a dedicated translation machinery responsible for the synthesis of mitochondrial genome-encoded proteins, including at least some of the essential transmembrane subunits of the mitochondrial respiratory chain. The mitoribosomes are attached to the mitochondrial inner membrane and translation products are cotranslationally integrated into the membrane. This chain is Large ribosomal subunit protein bL17m (MRPL8), found in Saccharomyces cerevisiae (strain ATCC 204508 / S288c) (Baker's yeast).